Here is a 154-residue protein sequence, read N- to C-terminus: SsrA-binding protein (154 aa).

A disordered region spans residues 131-154; sequence DKRQDLKQKEAKRDIERAFKERQQ. A compositionally biased stretch (basic and acidic residues) spans 132–154; sequence KRQDLKQKEAKRDIERAFKERQQ.

It belongs to the SmpB family.

The protein resides in the cytoplasm. Required for rescue of stalled ribosomes mediated by trans-translation. Binds to transfer-messenger RNA (tmRNA), required for stable association of tmRNA with ribosomes. tmRNA and SmpB together mimic tRNA shape, replacing the anticodon stem-loop with SmpB. tmRNA is encoded by the ssrA gene; the 2 termini fold to resemble tRNA(Ala) and it encodes a 'tag peptide', a short internal open reading frame. During trans-translation Ala-aminoacylated tmRNA acts like a tRNA, entering the A-site of stalled ribosomes, displacing the stalled mRNA. The ribosome then switches to translate the ORF on the tmRNA; the nascent peptide is terminated with the 'tag peptide' encoded by the tmRNA and targeted for degradation. The ribosome is freed to recommence translation, which seems to be the essential function of trans-translation. The chain is SsrA-binding protein from Listeria innocua serovar 6a (strain ATCC BAA-680 / CLIP 11262).